The sequence spans 475 residues: BTB/POZ domain-containing protein 10 (475 aa).

Residues Met-1–Lys-144 are disordered. A compositionally biased stretch (basic residues) spans Leu-22–Lys-31. Positions Gly-57–Glu-80 are enriched in basic and acidic residues. Residues Ser-81 to Thr-94 are compositionally biased toward polar residues. Positions His-97 to Ser-107 are enriched in basic and acidic residues. Residues Ser-108–Lys-144 show a composition bias toward low complexity. Residues Ser-146–Leu-475 form an interaction with AKT family members region. Positions Glu-167 to Asp-241 constitute a BTB domain. The interval Glu-451–Leu-475 is disordered.

As to quaternary structure, interacts (via C-terminal 330-amino-acid region) with AKT1; AKT2 and AKT3. Interacts with PPP2CA and PPP1CA. As to expression, ubiquitously expressed (at protein level).

The protein resides in the nucleus. It localises to the cytoplasm. In terms of biological role, plays a major role as an activator of AKT family members by inhibiting PPP2CA-mediated dephosphorylation, thereby keeping AKTs activated. Plays a role in preventing motor neuronal death and in accelerating the growth of pancreatic beta cells. This chain is BTB/POZ domain-containing protein 10 (Btbd10), found in Mus musculus (Mouse).